A 185-amino-acid polypeptide reads, in one-letter code: Stathmin-4 (185 aa).

The SLD domain occupies 48–185; that stretch reads SDMEVIELNK…EVRKNKEATR (138 aa). Residues 90–185 adopt a coiled-coil conformation; the sequence is SLEEIQKKLE…EVRKNKEATR (96 aa). A disordered region spans residues 165 to 185; sequence ERLQEKDKHAEEVRKNKEATR. The span at 166 to 185 shows a compositional bias: basic and acidic residues; the sequence is RLQEKDKHAEEVRKNKEATR.

This sequence belongs to the stathmin family. As to expression, nervous tissue.

This chain is Stathmin-4 (stmn4), found in Xenopus laevis (African clawed frog).